A 295-amino-acid chain; its full sequence is Ribosomal protein L11 methyltransferase (295 aa).

Positions 146, 167, 189, and 231 each coordinate S-adenosyl-L-methionine.

It belongs to the methyltransferase superfamily. PrmA family.

The protein localises to the cytoplasm. The enzyme catalyses L-lysyl-[protein] + 3 S-adenosyl-L-methionine = N(6),N(6),N(6)-trimethyl-L-lysyl-[protein] + 3 S-adenosyl-L-homocysteine + 3 H(+). Methylates ribosomal protein L11. This chain is Ribosomal protein L11 methyltransferase, found in Vibrio cholerae serotype O1 (strain M66-2).